The chain runs to 617 residues: D-glucuronyl C5-epimerase (617 aa).

Topologically, residues 1 to 11 (MRCLAARVNYK) are cytoplasmic. The chain crosses the membrane as a helical; Signal-anchor for type II membrane protein span at residues 12 to 28 (TLIIICALFTLVTVLLW). The Lumenal portion of the chain corresponds to 29–617 (NKCSSDKAIQ…YLKGSRAKHN (589 aa)). Substrate-binding positions include Tyr-179, 184-186 (RDR), Gln-201, Tyr-209, Gln-212, and Gln-215. Residues Thr-237, Glu-239, Thr-268, Asn-269, and Asp-392 each contribute to the Ca(2+) site. Residues 429–432 (KLGE), 499–500 (EY), Asn-510, Tyr-514, Tyr-560, Arg-563, and 572–581 (NLARWDYHTT) contribute to the substrate site.

This sequence belongs to the D-glucuronyl C5-epimerase family. Homodimer. Interacts with HS2ST1.

The protein localises to the golgi apparatus membrane. It catalyses the reaction [heparosan-N-sulfate](n) = [heparan-N-sulfate](n). The protein operates within glycan metabolism; heparan sulfate biosynthesis. It functions in the pathway glycan metabolism; heparin biosynthesis. Functionally, converts D-glucuronic acid residues adjacent to N-sulfate sugar residues to L-iduronic acid residues, both in maturing heparan sulfate (HS) and heparin chains. This is important for further modifications that determine the specificity of interactions between these glycosaminoglycans and proteins. The sequence is that of D-glucuronyl C5-epimerase (GLCE) from Bos taurus (Bovine).